The sequence spans 244 residues: Putative membrane peptidase YdiL (244 aa).

Helical transmembrane passes span 7–27 (FIILTYIIMQFSALIAIPLLF), 44–64 (AQGLWSVISFIACLVVVLLIL), 80–100 (IGLSILWAIAGFFIALFSQGI), 127–147 (AVPLMIIVSSIVGPILEEIIF), 159–179 (TNFFFAGLISSVIFGIVHADL), and 202–222 (IWVPIFAHLMMNTFVVIMQLE). Residues Glu-143 and His-176 each act as proton donor/acceptor in the active site.

This sequence belongs to the peptidase U48 family.

It localises to the cell membrane. Functionally, may function as endopeptidase which proteolytically removes the C-terminal three residues of farnesylated peptides containing the CAAX motif where C is cysteine, A is an aliphatic amino acid and X is any amino acid. This is Putative membrane peptidase YdiL (ydiL) from Bacillus subtilis (strain 168).